We begin with the raw amino-acid sequence, 513 residues long: ATP synthase subunit alpha (513 aa).

Residue G169–T176 coordinates ATP.

The protein belongs to the ATPase alpha/beta chains family. In terms of assembly, F-type ATPases have 2 components, CF(1) - the catalytic core - and CF(0) - the membrane proton channel. CF(1) has five subunits: alpha(3), beta(3), gamma(1), delta(1), epsilon(1). CF(0) has three main subunits: a(1), b(2) and c(9-12). The alpha and beta chains form an alternating ring which encloses part of the gamma chain. CF(1) is attached to CF(0) by a central stalk formed by the gamma and epsilon chains, while a peripheral stalk is formed by the delta and b chains.

It is found in the cell inner membrane. It carries out the reaction ATP + H2O + 4 H(+)(in) = ADP + phosphate + 5 H(+)(out). Produces ATP from ADP in the presence of a proton gradient across the membrane. The alpha chain is a regulatory subunit. The polypeptide is ATP synthase subunit alpha (Shewanella denitrificans (strain OS217 / ATCC BAA-1090 / DSM 15013)).